Reading from the N-terminus, the 317-residue chain is Olfactory receptor 1B1 (317 aa).

At 1–29 (MSFAPNASHSPVFLLLGFSRANISYTLLF) the chain is on the extracellular side. 2 N-linked (GlcNAc...) asparagine glycosylation sites follow: N6 and N22. A helical transmembrane segment spans residues 30-50 (FLFLAIYLTTILGNVTLVLLI). The Cytoplasmic portion of the chain corresponds to 51–66 (SWDSRLHSPMYYLLRG). Residues 67-87 (LSVIDMGLSTVTLPQLLAHLV) traverse the membrane as a helical segment. At 88 to 98 (SHYPTIPAARC) the chain is on the extracellular side. Cysteines 98 and 184 form a disulfide. Residues 99–119 (LAQFFFFYAFGVTDTLVIAVM) traverse the membrane as a helical segment. Topologically, residues 120-144 (ALDRYVAICDPLHYALVMNHQRCAC) are cytoplasmic. A helical transmembrane segment spans residues 145–165 (LLALSWVVSILHTMLRVGLVL). At 166–201 (PLCWTGDAGGNVNLPHFFCDHRPLLRASCSDIHSNE) the chain is on the extracellular side. The chain crosses the membrane as a helical span at residues 202 to 222 (LAIFFEGGFLMLGPCALIVLS). The Cytoplasmic segment spans residues 223–248 (YVRIGAAILRLPSAAGRRRAVSTCGS). Residues 249 to 269 (HLTMVGFLYGTIICVYFQPPF) traverse the membrane as a helical segment. The Extracellular portion of the chain corresponds to 270 to 276 (QNSQYQD). Residues 277 to 297 (MVASVMYTAITPLANPFVYSL) form a helical membrane-spanning segment. Residues 298-317 (HNKDVKGALCRLLEWVKVDP) are Cytoplasmic-facing.

Belongs to the G-protein coupled receptor 1 family.

The protein resides in the cell membrane. Functionally, odorant receptor. This chain is Olfactory receptor 1B1 (OR1B1), found in Homo sapiens (Human).